We begin with the raw amino-acid sequence, 453 residues long: Aminodeoxychorismate synthase component 1 (453 aa).

L-tryptophan is bound by residues Ser36, 43 to 46 (YSRF), and 240 to 242 (PFS). Glu258 functions as the Proton donor in the catalytic mechanism. Lys274 acts as the N6-(4-deoxychorismate)-lysine intermediate in catalysis.

This sequence belongs to the anthranilate synthase component I family. As to quaternary structure, monomer. Heterodimer consisting of two non-identical subunits: a glutamine amidotransferase subunit (PabA) and a aminodeoxychorismate synthase subunit (PabB). Mg(2+) is required as a cofactor.

It carries out the reaction chorismate + L-glutamine = 4-amino-4-deoxychorismate + L-glutamate. The protein operates within cofactor biosynthesis; tetrahydrofolate biosynthesis; 4-aminobenzoate from chorismate: step 1/2. Inhibited by 6-diazo-5-oxo-L-norleucine (DON). The inhibition is competitive with glutamine but uncompetitive with chorismate. Also inhibited by 2-fluorochorismate. Its function is as follows. Part of a heterodimeric complex that catalyzes the two-step biosynthesis of 4-amino-4-deoxychorismate (ADC), a precursor of p-aminobenzoate (PABA) and tetrahydrofolate. In the first step, a glutamine amidotransferase (PabA) generates ammonia as a substrate that, along with chorismate, is used in the second step, catalyzed by aminodeoxychorismate synthase (PabB) to produce ADC. PabB, in the absence of PabA, can catalyze the formation of ADC in the presence of exogenous ammonia. This Escherichia coli (strain K12) protein is Aminodeoxychorismate synthase component 1 (pabB).